We begin with the raw amino-acid sequence, 186 residues long: Large ribosomal subunit protein uL22 (186 aa).

Composition is skewed to basic and acidic residues over residues 157 to 167 and 177 to 186; these read VSKATDDEPTK and RQKEKMLRSE. A disordered region spans residues 157–186; the sequence is VSKATDDEPTKKKLSKKKLQRQKEKMLRSE.

It belongs to the universal ribosomal protein uL22 family.

This is Large ribosomal subunit protein uL22 (RpL17) from Drosophila yakuba (Fruit fly).